A 306-amino-acid chain; its full sequence is Pantothenate kinase (306 aa).

ATP is bound at residue 91–98 (GSVAVGKS).

It belongs to the prokaryotic pantothenate kinase family.

The protein resides in the cytoplasm. It catalyses the reaction (R)-pantothenate + ATP = (R)-4'-phosphopantothenate + ADP + H(+). The protein operates within cofactor biosynthesis; coenzyme A biosynthesis; CoA from (R)-pantothenate: step 1/5. This is Pantothenate kinase from Streptococcus equi subsp. zooepidemicus (strain MGCS10565).